An 84-amino-acid chain; its full sequence is Small ribosomal subunit protein uS17 (84 aa).

This sequence belongs to the universal ribosomal protein uS17 family. Part of the 30S ribosomal subunit.

Functionally, one of the primary rRNA binding proteins, it binds specifically to the 5'-end of 16S ribosomal RNA. This is Small ribosomal subunit protein uS17 from Actinobacillus pleuropneumoniae serotype 5b (strain L20).